The primary structure comprises 227 residues: Cytochrome c oxidase subunit 2 (227 aa).

The Mitochondrial intermembrane segment spans residues 1–14; sequence MAHAVQYGFQDAAA. Residues 15–45 form a helical membrane-spanning segment; sequence PIMEELLYFHDHTLMIVFMISSLVLYIISLM. At 46-59 the chain is on the mitochondrial matrix side; that stretch reads LSTELTHTSTMDAQ. Residues 60 to 87 form a helical membrane-spanning segment; the sequence is EVETVWTILPAVILILIALPSLRILYMM. The Mitochondrial intermembrane segment spans residues 88–227; that stretch reads DEIETPSLTL…YFEEWLLKTL (140 aa). The Cu cation site is built by H161, C196, E198, C200, H204, and M207. E198 is a Mg(2+) binding site. Position 218 is a phosphotyrosine (Y218).

This sequence belongs to the cytochrome c oxidase subunit 2 family. As to quaternary structure, component of the cytochrome c oxidase (complex IV, CIV), a multisubunit enzyme composed of 14 subunits. The complex is composed of a catalytic core of 3 subunits MT-CO1, MT-CO2 and MT-CO3, encoded in the mitochondrial DNA, and 11 supernumerary subunits COX4I, COX5A, COX5B, COX6A, COX6B, COX6C, COX7A, COX7B, COX7C, COX8 and NDUFA4, which are encoded in the nuclear genome. The complex exists as a monomer or a dimer and forms supercomplexes (SCs) in the inner mitochondrial membrane with NADH-ubiquinone oxidoreductase (complex I, CI) and ubiquinol-cytochrome c oxidoreductase (cytochrome b-c1 complex, complex III, CIII), resulting in different assemblies (supercomplex SCI(1)III(2)IV(1) and megacomplex MCI(2)III(2)IV(2)). Found in a complex with TMEM177, COA6, COX18, COX20, SCO1 and SCO2. Interacts with TMEM177 in a COX20-dependent manner. Interacts with COX20. Interacts with COX16. The cofactor is Cu cation.

The protein localises to the mitochondrion inner membrane. The enzyme catalyses 4 Fe(II)-[cytochrome c] + O2 + 8 H(+)(in) = 4 Fe(III)-[cytochrome c] + 2 H2O + 4 H(+)(out). Its function is as follows. Component of the cytochrome c oxidase, the last enzyme in the mitochondrial electron transport chain which drives oxidative phosphorylation. The respiratory chain contains 3 multisubunit complexes succinate dehydrogenase (complex II, CII), ubiquinol-cytochrome c oxidoreductase (cytochrome b-c1 complex, complex III, CIII) and cytochrome c oxidase (complex IV, CIV), that cooperate to transfer electrons derived from NADH and succinate to molecular oxygen, creating an electrochemical gradient over the inner membrane that drives transmembrane transport and the ATP synthase. Cytochrome c oxidase is the component of the respiratory chain that catalyzes the reduction of oxygen to water. Electrons originating from reduced cytochrome c in the intermembrane space (IMS) are transferred via the dinuclear copper A center (CU(A)) of subunit 2 and heme A of subunit 1 to the active site in subunit 1, a binuclear center (BNC) formed by heme A3 and copper B (CU(B)). The BNC reduces molecular oxygen to 2 water molecules using 4 electrons from cytochrome c in the IMS and 4 protons from the mitochondrial matrix. This chain is Cytochrome c oxidase subunit 2 (MT-CO2), found in Galago senegalensis (Northern lesser bushbaby).